Here is a 440-residue protein sequence, read N- to C-terminus: MENIQKLIARYPLVEDLVALKETTWFNPGATSLAQGLPYVGLTEQDVNAAHDRLARFAPYLAKAFPQTAAAGGMIESDVVAIPAMQKRLEKEYGQTIDGEMLLKKDSHLAISGSIKARGGIYEVLTHAEKLALEAGLLTTDDDYSVLLSPEFKQFFSQYSIAVGSTGNLGLSIGIMSACIGFKVTVHMSADARAWKKAKLRSHGVTVVEYEDDYGVAVEQGRKAAQSDPNCFFIDDENSRTLFLGYAVAGQRLKAQFAQQGRVVDASHPLFVYLPCGVGGGPGGVAFGLKLAFGDNVHCFFAEPTHSPCMLLGVYTGLHDAISVQDIGIDNLTAADGLAVGRASGFVGRAMERLLDGLYTLDDQTMYDMLGWLAQEEGIRLEPSALAGMAGPQRICAAAAYQQRHGFSQTQLGNATHLVWATGGGMVPEDEMEQYLAKGR.

N6-(pyridoxal phosphate)lysine is present on K116.

Belongs to the serine/threonine dehydratase family. DsdA subfamily. In terms of assembly, monomer. It depends on pyridoxal 5'-phosphate as a cofactor.

The catalysed reaction is D-serine = pyruvate + NH4(+). This is D-serine dehydratase from Salmonella enteritidis PT4 (strain P125109).